Here is a 393-residue protein sequence, read N- to C-terminus: Enoyl-[acyl-carrier-protein] reductase [NADH] (393 aa).

NAD(+)-binding positions include 48-53, 74-75, 111-112, and 139-140; these read GSSTGY, FE, DA, and LA. Y225 provides a ligand contact to substrate. Residue Y235 is the Proton donor of the active site. NAD(+) is bound by residues K244 and 273–275; that span reads LVT.

This sequence belongs to the TER reductase family. In terms of assembly, monomer.

It catalyses the reaction a 2,3-saturated acyl-[ACP] + NAD(+) = a (2E)-enoyl-[ACP] + NADH + H(+). It participates in lipid metabolism; fatty acid biosynthesis. Functionally, involved in the final reduction of the elongation cycle of fatty acid synthesis (FAS II). Catalyzes the reduction of a carbon-carbon double bond in an enoyl moiety that is covalently linked to an acyl carrier protein (ACP). This Pseudoalteromonas atlantica (strain T6c / ATCC BAA-1087) protein is Enoyl-[acyl-carrier-protein] reductase [NADH].